Reading from the N-terminus, the 637-residue chain is Protein arginine N-methyltransferase 5 (637 aa).

Ala2 bears the N-acetylalanine mark. The tract at residues 13-292 (RVSSGRDLNC…YLEYLSQNRP (280 aa)) is TIM barrel. An SAM-dependent MTase PRMT-type domain is found at 308–615 (LQSPLQPLMD…SNSKKVWYEW (308 aa)). Tyr324 is an S-adenosyl-L-methionine binding site. Phe327 is a binding site for a protein. Residues 333–334 (KY), Glu392, and 419–420 (DM) contribute to the S-adenosyl-L-methionine site. Residues Glu435 and Glu444 each coordinate a protein. Catalysis depends on proton donor/acceptor residues Glu435 and Glu444. The interval 465–637 (PGEYTSFLAP…PTGRSYTIGL (173 aa)) is beta barrel. A dimerization region spans residues 488–494 (REKDRDP).

This sequence belongs to the class I-like SAM-binding methyltransferase superfamily. Protein arginine N-methyltransferase family. Forms, at least, homodimers and homotetramers. Component of the methylosome complex, composed of PRMT5, WDR77 and CLNS1A. Found in a complex composed of PRMT5, WDR77 and RIOK1. RIOK1 and CLNS1A associate with PRMT5 in a mutually exclusive fashion, which allows the recruitment of distinct methylation substrates, such as nucleolin/NCL and Sm proteins, respectively. Interacts with PRDM1. Identified in a complex composed of methylosome and PRMT1 and ERH. Interacts with EGFR; methylates EGFR and stimulates EGFR-mediated ERK activation. Interacts with HOXA9. Interacts with SRGAP2. Found in a complex with COPRS, RUNX1 and CBFB. Interacts with CHTOP; the interaction symmetrically methylates CHTOP, but seems to require the presence of PRMT1. Interacts with EPB41L3; this modulates methylation of target proteins. Component of a high molecular weight E2F-pocket protein complex, CERC (cyclin E1 repressor complex). Associates with SWI/SNF remodeling complexes containing SMARCA2 and SMARCA4. Interacts with JAK2, SSTR1, SUPT5H, BRAF and with active RAF1. Interacts with LSM11, PRMT7 and SNRPD3. Interacts with COPRS; promoting its recruitment on histone H4. Interacts with CLNS1A/pICln. Identified in a complex with CLNS1A/pICln and Sm proteins. Interacts with RPS10. Interacts with WDR77. Interacts with IWS1. Interacts with CRY1. Interacts with POLR2A. Interacts with SMN1/SMN2. Interacts with LYAR; this interaction is direct. Interacts with TTC5/STRAP; this interaction is DNA damage-dependent and promotes PRMT5 interaction with p53/TP53. Interacts with p53/TP53 in response to DNA damage; the interaction is TTC5/STRAP dependent. Interacts with FAM47E; the interaction is direct, promotes PRMT5 localization to chromatin, and does not disrupt its association with WDR77 or STUB1. Interacts with TDRD6. Interacts with STUB1. Interacts with MBD2. Does not interact with MBD3.

The protein resides in the cytoplasm. Its subcellular location is the nucleus. The protein localises to the golgi apparatus. It catalyses the reaction L-arginyl-[protein] + 2 S-adenosyl-L-methionine = N(omega),N(omega)'-dimethyl-L-arginyl-[protein] + 2 S-adenosyl-L-homocysteine + 2 H(+). Its activity is regulated as follows. Activity is increased by EGF, HGF, FGF1 or FGF2 treatments, and slightly decreased by NGF treatment. Arginine methyltransferase that can both catalyze the formation of omega-N monomethylarginine (MMA) and symmetrical dimethylarginine (sDMA), with a preference for the formation of MMA. Specifically mediates the symmetrical dimethylation of arginine residues in the small nuclear ribonucleoproteins Sm D1 (SNRPD1) and Sm D3 (SNRPD3); such methylation being required for the assembly and biogenesis of snRNP core particles. Methylates SUPT5H and may regulate its transcriptional elongation properties. May methylate the N-terminal region of MBD2. Mono- and dimethylates arginine residues of myelin basic protein (MBP) in vitro. May play a role in cytokine-activated transduction pathways. Negatively regulates cyclin E1 promoter activity and cellular proliferation. Methylates histone H2A and H4 'Arg-3' during germ cell development. Methylates histone H3 'Arg-8', which may repress transcription. Methylates the Piwi proteins (PIWIL1, PIWIL2 and PIWIL4), methylation of Piwi proteins being required for the interaction with Tudor domain-containing proteins and subsequent localization to the meiotic nuage. Methylates RPS10. Attenuates EGF signaling through the MAPK1/MAPK3 pathway acting at 2 levels. First, monomethylates EGFR; this enhances EGFR 'Tyr-1197' phosphorylation and PTPN6 recruitment, eventually leading to reduced SOS1 phosphorylation. Second, methylates RAF1 and probably BRAF, hence destabilizing these 2 signaling proteins and reducing their catalytic activity. Required for induction of E-selectin and VCAM-1, on the endothelial cells surface at sites of inflammation. Methylates HOXA9. Methylates and regulates SRGAP2 which is involved in cell migration and differentiation. Acts as a transcriptional corepressor in CRY1-mediated repression of the core circadian component PER1 by regulating the H4R3 dimethylation at the PER1 promoter. Methylates GM130/GOLGA2, regulating Golgi ribbon formation. Methylates H4R3 in genes involved in glioblastomagenesis in a CHTOP- and/or TET1-dependent manner. Symmetrically methylates POLR2A, a modification that allows the recruitment to POLR2A of proteins including SMN1/SMN2 and SETX. This is required for resolving RNA-DNA hybrids created by RNA polymerase II, that form R-loop in transcription terminal regions, an important step in proper transcription termination. Along with LYAR, binds the promoter of gamma-globin HBG1/HBG2 and represses its expression. Symmetrically methylates NCL. Methylates p53/TP53; methylation might possibly affect p53/TP53 target gene specificity. Involved in spliceosome maturation and mRNA splicing in prophase I spermatocytes through the catalysis of the symmetrical arginine dimethylation of SNRPB (small nuclear ribonucleoprotein-associated protein) and the interaction with tudor domain-containing protein TDRD6. In Mus musculus (Mouse), this protein is Protein arginine N-methyltransferase 5 (Prmt5).